The sequence spans 360 residues: Small ribosomal subunit protein mS22 (360 aa).

Phosphoserine is present on serine 54. N6-acetyllysine is present on lysine 211.

Belongs to the mitochondrion-specific ribosomal protein mS22 family. Component of the mitochondrial small ribosomal subunit (mt-SSU). Mature mammalian 55S mitochondrial ribosomes consist of a small (28S) and a large (39S) subunit. The 28S small subunit contains a 12S ribosomal RNA (12S mt-rRNA) and 30 different proteins. The 39S large subunit contains a 16S rRNA (16S mt-rRNA), a copy of mitochondrial valine transfer RNA (mt-tRNA(Val)), which plays an integral structural role, and 52 different proteins.

The protein localises to the mitochondrion. This Homo sapiens (Human) protein is Small ribosomal subunit protein mS22 (MRPS22).